A 261-amino-acid chain; its full sequence is Small ribosomal subunit protein uS3 (261 aa).

Residues 39–107 enclose the KH type-2 domain; sequence VREYLKRKLA…PVHVSIEEIR (69 aa). The disordered stretch occupies residues 213–261; sequence QPVAEEPAADDRRPRRTPGRPDGDKPRTRTVKKVDGAADPAKRVRKAGA. Basic and acidic residues predominate over residues 221-254; it reads ADDRRPRRTPGRPDGDKPRTRTVKKVDGAADPAK.

This sequence belongs to the universal ribosomal protein uS3 family. In terms of assembly, part of the 30S ribosomal subunit. Forms a tight complex with proteins S10 and S14.

Its function is as follows. Binds the lower part of the 30S subunit head. Binds mRNA in the 70S ribosome, positioning it for translation. The polypeptide is Small ribosomal subunit protein uS3 (Dechloromonas aromatica (strain RCB)).